The following is a 103-amino-acid chain: Large ribosomal subunit protein uL23 (103 aa).

The protein belongs to the universal ribosomal protein uL23 family. In terms of assembly, part of the 50S ribosomal subunit. Contacts protein L29, and trigger factor when it is bound to the ribosome.

One of the early assembly proteins it binds 23S rRNA. One of the proteins that surrounds the polypeptide exit tunnel on the outside of the ribosome. Forms the main docking site for trigger factor binding to the ribosome. This is Large ribosomal subunit protein uL23 from Chlorobium phaeobacteroides (strain DSM 266 / SMG 266 / 2430).